The sequence spans 132 residues: Small ribosomal subunit protein uS8 (132 aa).

The protein belongs to the universal ribosomal protein uS8 family. Part of the 30S ribosomal subunit. Contacts proteins S5 and S12.

Functionally, one of the primary rRNA binding proteins, it binds directly to 16S rRNA central domain where it helps coordinate assembly of the platform of the 30S subunit. The protein is Small ribosomal subunit protein uS8 of Alkaliphilus oremlandii (strain OhILAs) (Clostridium oremlandii (strain OhILAs)).